Reading from the N-terminus, the 497-residue chain is Cytochrome P450 monooxygenase opdB (497 aa).

A helical membrane pass occupies residues 26-46 (YLGAMAGSVILLISAFTLSLG). Residues 69–90 (MSKFTRSRELSQQGEDAAGTEP) form a disordered region. Residue C454 participates in heme binding.

Heme serves as cofactor.

Its subcellular location is the membrane. The protein operates within secondary metabolite biosynthesis. Cytochrome P450 monooxygenase; part of the gene cluster that mediates the biosynthesis of oxopyrrolidines, polyketide-amino acid hybrid compounds with feature structures of tetramic acid. Does not seem to play a role in oxopyrrolidines A and B biosynthesis. May be involved in further modifications of these oxopyrrolidines. This chain is Cytochrome P450 monooxygenase opdB, found in Penicillium oxalicum (strain 114-2 / CGMCC 5302) (Penicillium decumbens).